The chain runs to 239 residues: Ribonuclease PH (239 aa).

Phosphate-binding positions include Arg-86 and 124–126 (GTR).

This sequence belongs to the RNase PH family. In terms of assembly, homohexameric ring arranged as a trimer of dimers.

It catalyses the reaction tRNA(n+1) + phosphate = tRNA(n) + a ribonucleoside 5'-diphosphate. In terms of biological role, phosphorolytic 3'-5' exoribonuclease that plays an important role in tRNA 3'-end maturation. Removes nucleotide residues following the 3'-CCA terminus of tRNAs; can also add nucleotides to the ends of RNA molecules by using nucleoside diphosphates as substrates, but this may not be physiologically important. Probably plays a role in initiation of 16S rRNA degradation (leading to ribosome degradation) during starvation. This is Ribonuclease PH from Aromatoleum aromaticum (strain DSM 19018 / LMG 30748 / EbN1) (Azoarcus sp. (strain EbN1)).